The chain runs to 264 residues: Thymidylate synthase (264 aa).

DUMP is bound at residue arginine 21. Histidine 51 lines the (6R)-5,10-methylene-5,6,7,8-tetrahydrofolate pocket. 126 to 127 (RR) provides a ligand contact to dUMP. The Nucleophile role is filled by cysteine 146. DUMP is bound by residues 166-169 (RSAD), asparagine 177, and 207-209 (HLY). Aspartate 169 lines the (6R)-5,10-methylene-5,6,7,8-tetrahydrofolate pocket. Position 263 (alanine 263) interacts with (6R)-5,10-methylene-5,6,7,8-tetrahydrofolate.

Belongs to the thymidylate synthase family. Bacterial-type ThyA subfamily. Homodimer.

The protein localises to the cytoplasm. It carries out the reaction dUMP + (6R)-5,10-methylene-5,6,7,8-tetrahydrofolate = 7,8-dihydrofolate + dTMP. It functions in the pathway pyrimidine metabolism; dTTP biosynthesis. Its function is as follows. Catalyzes the reductive methylation of 2'-deoxyuridine-5'-monophosphate (dUMP) to 2'-deoxythymidine-5'-monophosphate (dTMP) while utilizing 5,10-methylenetetrahydrofolate (mTHF) as the methyl donor and reductant in the reaction, yielding dihydrofolate (DHF) as a by-product. This enzymatic reaction provides an intracellular de novo source of dTMP, an essential precursor for DNA biosynthesis. The chain is Thymidylate synthase from Methylorubrum extorquens (strain CM4 / NCIMB 13688) (Methylobacterium extorquens).